The following is a 743-amino-acid chain: DEAD-box ATP-dependent RNA helicase 3B, chloroplastic (743 aa).

The N-terminal 37 residues, 1–37 (MASLTLPALALALSNPGAVRLRAAAFRCWALRRRGWA), are a transit peptide targeting the chloroplast. The disordered stretch occupies residues 60–79 (GSDDEDGEGPYGSDADEGFE). The segment covering 61–79 (SDDEDGEGPYGSDADEGFE) has biased composition (acidic residues). Positions 88–116 (LAIARLGLPDELVATLEKRGITHLFPIQR) match the Q motif motif. The region spanning 119–295 (LIPALEGRDL…RRYLNNPLTI (177 aa)) is the Helicase ATP-binding domain. An ATP-binding site is contributed by 132-139 (AKTGTGKT). The DEAD box signature appears at 243-246 (DEAD). The Helicase C-terminal domain maps to 324–469 (VLSDLITVYA…ISPPSIEEVL (146 aa)). The tract at residues 606 to 719 (LTKISKLPAL…RSSSFGGRES (114 aa)) is disordered. Residues 642-653 (GGGASRGRGGWD) show a composition bias toward gly residues. The segment covering 657 to 671 (EDRFRRGGRSLRSDN) has biased composition (basic and acidic residues). Residues 688-719 (RSSSFGSRSSSYSSRGSPSFGGRSSSFGGRES) show a composition bias toward low complexity. A CCHC-type zinc finger spans residues 725 to 742 (GACFNCGESGHRATDCPN).

This sequence belongs to the DEAD box helicase family. DDX21/DDX50 subfamily.

The protein localises to the plastid. It localises to the chloroplast stroma. It catalyses the reaction ATP + H2O = ADP + phosphate + H(+). Nuclear genome-encoded factor involved in ribosome biogenesis in chloroplasts. Binds specific group II introns in chloroplasts and facilitates their splicing. Is required for rRNA maturation in plastids and may contribute to the assembly of the large (50S) ribosomal subunit. Required for normal development of chloroplasts. In Zea mays (Maize), this protein is DEAD-box ATP-dependent RNA helicase 3B, chloroplastic.